A 169-amino-acid polypeptide reads, in one-letter code: UPF0303 protein Oant_1766 (169 aa).

It belongs to the UPF0303 family.

This chain is UPF0303 protein Oant_1766, found in Brucella anthropi (strain ATCC 49188 / DSM 6882 / CCUG 24695 / JCM 21032 / LMG 3331 / NBRC 15819 / NCTC 12168 / Alc 37) (Ochrobactrum anthropi).